A 144-amino-acid polypeptide reads, in one-letter code: Large ribosomal subunit protein uL15 (144 aa).

The segment at 1-53 (MRLNTLSPAEGSKHASKRPGRGIGSGLGKTGGRGHKGQKSRSGGGVRRGFEGG) is disordered. The segment covering 21–31 (RGIGSGLGKTG) has biased composition (gly residues).

Belongs to the universal ribosomal protein uL15 family. In terms of assembly, part of the 50S ribosomal subunit.

Functionally, binds to the 23S rRNA. The polypeptide is Large ribosomal subunit protein uL15 (Sodalis glossinidius (strain morsitans)).